Here is a 275-residue protein sequence, read N- to C-terminus: 3-methyl-2-oxobutanoate hydroxymethyltransferase (275 aa).

Mg(2+) contacts are provided by D44 and D83. 3-methyl-2-oxobutanoate contacts are provided by residues D44–S45, D83, and K113. E115 is a Mg(2+) binding site. The active-site Proton acceptor is the E182.

The protein belongs to the PanB family. As to quaternary structure, homodecamer; pentamer of dimers. The cofactor is Mg(2+).

It localises to the cytoplasm. The enzyme catalyses 3-methyl-2-oxobutanoate + (6R)-5,10-methylene-5,6,7,8-tetrahydrofolate + H2O = 2-dehydropantoate + (6S)-5,6,7,8-tetrahydrofolate. The protein operates within cofactor biosynthesis; (R)-pantothenate biosynthesis; (R)-pantoate from 3-methyl-2-oxobutanoate: step 1/2. In terms of biological role, catalyzes the reversible reaction in which hydroxymethyl group from 5,10-methylenetetrahydrofolate is transferred onto alpha-ketoisovalerate to form ketopantoate. In Clostridium botulinum (strain Kyoto / Type A2), this protein is 3-methyl-2-oxobutanoate hydroxymethyltransferase.